The following is a 449-amino-acid chain: Probable aminotransferase TAT1 (449 aa).

Polar residues predominate over residues 1–12; the sequence is MNHNSNLVLPSH. Residues 1–20 form a disordered region; that stretch reads MNHNSNLVLPSHQTETQTQD.

Belongs to the class-I pyridoxal-phosphate-dependent aminotransferase family. Requires pyridoxal 5'-phosphate as cofactor.

The sequence is that of Probable aminotransferase TAT1 from Arabidopsis thaliana (Mouse-ear cress).